The primary structure comprises 215 residues: Kunitz trypsin inhibitor 4 (215 aa).

The first 28 residues, 1-28 (MTKTTKTMNPKFYLVLALTAVLASNAYG), serve as a signal peptide directing secretion. 2 cysteine pairs are disulfide-bonded: Cys66/Cys112 and Cys165/Cys176. N-linked (GlcNAc...) asparagine glycosylation occurs at Asn206.

Belongs to the protease inhibitor I3 (leguminous Kunitz-type inhibitor) family. Expressed in roots.

It is found in the endoplasmic reticulum. Exhibits Kunitz trypsin protease inhibitor activity. Involved in modulating programmed cell death (PCD) in plant-pathogen interactions. Can inhibit both serine proteases and cysteine proteases. May be involved in the modulation of the proteases that participate in the hydrolysis of dietary proteins in the gut of spider mites. In Arabidopsis thaliana (Mouse-ear cress), this protein is Kunitz trypsin inhibitor 4.